Here is a 266-residue protein sequence, read N- to C-terminus: 4-hydroxy-tetrahydrodipicolinate reductase (266 aa).

10-15 (GPRGRM) contacts NAD(+). Position 38 (Lys-38) interacts with NADP(+). Residues 99 to 101 (GTT) and 125 to 128 (APNF) contribute to the NAD(+) site. His-155 serves as the catalytic Proton donor/acceptor. A (S)-2,3,4,5-tetrahydrodipicolinate-binding site is contributed by His-156. The active-site Proton donor is the Lys-159. 165 to 166 (GT) lines the (S)-2,3,4,5-tetrahydrodipicolinate pocket.

The protein belongs to the DapB family.

It localises to the cytoplasm. The enzyme catalyses (S)-2,3,4,5-tetrahydrodipicolinate + NAD(+) + H2O = (2S,4S)-4-hydroxy-2,3,4,5-tetrahydrodipicolinate + NADH + H(+). It carries out the reaction (S)-2,3,4,5-tetrahydrodipicolinate + NADP(+) + H2O = (2S,4S)-4-hydroxy-2,3,4,5-tetrahydrodipicolinate + NADPH + H(+). Its pathway is amino-acid biosynthesis; L-lysine biosynthesis via DAP pathway; (S)-tetrahydrodipicolinate from L-aspartate: step 4/4. Catalyzes the conversion of 4-hydroxy-tetrahydrodipicolinate (HTPA) to tetrahydrodipicolinate. In Bacillus anthracis (strain A0248), this protein is 4-hydroxy-tetrahydrodipicolinate reductase.